The chain runs to 100 residues: Small ribosomal subunit protein uS14 (100 aa).

This sequence belongs to the universal ribosomal protein uS14 family. As to quaternary structure, part of the 30S ribosomal subunit. Contacts proteins S3 and S10.

Binds 16S rRNA, required for the assembly of 30S particles and may also be responsible for determining the conformation of the 16S rRNA at the A site. This is Small ribosomal subunit protein uS14 from Synechococcus sp. (strain CC9605).